We begin with the raw amino-acid sequence, 356 residues long: Tricetin 3',4',5'-O-trimethyltransferase (356 aa).

Residue 123 to 129 (MNQDKVL) coordinates substrate. A substrate binding region spans residues 155–173 (AFEYHGTDPRFNRVFNEGM). S-adenosyl-L-methionine-binding residues include Gly-201, Asp-224, Asp-244, Met-245, and Lys-258. His-262 functions as the Proton acceptor in the catalytic mechanism.

This sequence belongs to the class I-like SAM-binding methyltransferase superfamily. Cation-independent O-methyltransferase family. COMT subfamily. As to quaternary structure, homodimer. The monomer is fully active and dimerization is not required for sequential methylation. In terms of tissue distribution, expressed in roots, stems and leaves.

The catalysed reaction is tricetin + 3 S-adenosyl-L-methionine = 3',4',5'-O-trimethyltricetin + 3 S-adenosyl-L-homocysteine + 3 H(+). Flavonoid B-ring-specific O-methyltransferase with a preference for flavones &gt; dihydroflavones &gt; flavonols that possess at least two B-ring hydroxyl groups. Active with tricetin, 5-hydroxyferulic acid, luteolin, quercitin, eriodictyol, quercetagetin, taxifolin, gossypetin and myricetin. No activity with naringenin, apigenin, kaempferol, 7,8-dihydroxy- or 5,7,8-trihydroxy flavones, chlorogenic acid, gallic acid or daphnetin. Catalyzes the sequential O-methylation of tricetin via 3'-O-methyltricetin, 3',5'-O-methyltricetin to 3',4',5'-O-trimethyltricetin. May also be involved in S lignin biosynthesis. In Triticum aestivum (Wheat), this protein is Tricetin 3',4',5'-O-trimethyltransferase (OMT2).